A 413-amino-acid polypeptide reads, in one-letter code: Docking protein 2 (413 aa).

The PH domain maps to Val4 to Phe114. Residues Pro147–Gly252 form the IRS-type PTB domain. A disordered region spans residues Asn247–Gln292. Over residues Pro250–Glu268 the composition is skewed to pro residues. Phosphotyrosine is present on Tyr271. Residues Ser277–Thr289 are compositionally biased toward pro residues. Residues Tyr300 and Tyr346 each carry the phosphotyrosine modification. Residues Gln362 to Gly381 are compositionally biased toward basic and acidic residues. The segment at Gln362–Lys383 is disordered.

Belongs to the DOK family. Type A subfamily. Interacts with phosphorylated RASGAP and EGFR. Interacts with RET and NCK. Interacts (via PH domain) with TEK/TIE2 (tyrosine phosphorylated). In terms of processing, on immunoreceptor stimulation, phosphorylated on C-terminal tyrosine residues. Phosphorylation on Tyr-346 is required for binding to the SH2 domain of NCK. Phosphorylation on both Tyr-271 and Tyr-300 is required for interaction with RASGAP. Phosphorylated on tyrosine residues by TEK/TIE2.

DOK proteins are enzymatically inert adaptor or scaffolding proteins. They provide a docking platform for the assembly of multimolecular signaling complexes. DOK2 may modulate the cellular proliferation induced by IL-4, as well as IL-2 and IL-3. May be involved in modulating Bcr-Abl signaling. Attenuates EGF-stimulated MAP kinase activation. The polypeptide is Docking protein 2 (DOK2) (Bos taurus (Bovine)).